A 252-amino-acid chain; its full sequence is Triosephosphate isomerase (252 aa).

10–12 (NWK) contributes to the substrate binding site. The active-site Electrophile is the histidine 96. The active-site Proton acceptor is the glutamate 168. Residues glycine 174, serine 214, and 235–236 (GG) each bind substrate.

Belongs to the triosephosphate isomerase family. As to quaternary structure, homodimer.

The protein resides in the cytoplasm. The enzyme catalyses D-glyceraldehyde 3-phosphate = dihydroxyacetone phosphate. Its pathway is carbohydrate biosynthesis; gluconeogenesis. It participates in carbohydrate degradation; glycolysis; D-glyceraldehyde 3-phosphate from glycerone phosphate: step 1/1. Involved in the gluconeogenesis. Catalyzes stereospecifically the conversion of dihydroxyacetone phosphate (DHAP) to D-glyceraldehyde-3-phosphate (G3P). This is Triosephosphate isomerase from Lactobacillus delbrueckii subsp. bulgaricus (strain ATCC 11842 / DSM 20081 / BCRC 10696 / JCM 1002 / NBRC 13953 / NCIMB 11778 / NCTC 12712 / WDCM 00102 / Lb 14).